Reading from the N-terminus, the 235-residue chain is Nuclear egress protein 2 (235 aa).

At 1-214 (MNSTRLVYEL…IKPWTLSKKN (214 aa)) the chain is on the perinuclear space side. A helical membrane pass occupies residues 215–232 (IWTIILSLVAVVAIILKW). Residues 233–235 (REL) are Nuclear-facing.

This sequence belongs to the herpesviridae NEC2 protein family. In terms of assembly, forms a heterohexameric complex with NEC1. Post-translationally, phosphorylated.

It is found in the host nucleus inner membrane. Its function is as follows. Plays an essential role in virion nuclear egress, the first step of virion release from infected cell. Within the host nucleus, NEC1 interacts with the newly formed capsid through the vertexes and directs it to the inner nuclear membrane by associating with NEC2. Induces the budding of the capsid at the inner nuclear membrane as well as its envelopment into the perinuclear space. There, the NEC1/NEC2 complex promotes the fusion of the enveloped capsid with the outer nuclear membrane and the subsequent release of the viral capsid into the cytoplasm where it will reach the secondary budding sites in the host Golgi or trans-Golgi network. The protein is Nuclear egress protein 2 of Saimiri sciureus (Common squirrel monkey).